The following is a 209-amino-acid chain: MPIGVPKVPFRLPGDEDAVWIDVYNRLFRERLLFLGQQVDDELANQLICIMIYPNGEDDSRDMYLYVNSPGGAVFAGISIYDAMQFVVPDVQTICIGLAASMGSFVLAGGEITKRIALPHARVMIHQPASSYYEGQVGECIMEAEEVLKIRDCITKVYAQRTGKPLWVVSEDTERDVFTSAEEAKVYGVIDPVAVETSSNSPISKLTKS.

The active-site Nucleophile is the Ser101. The active site involves His126.

It belongs to the peptidase S14 family. Component of the chloroplastic Clp protease core complex.

It is found in the plastid. Its subcellular location is the chloroplast stroma. It carries out the reaction Hydrolysis of proteins to small peptides in the presence of ATP and magnesium. alpha-casein is the usual test substrate. In the absence of ATP, only oligopeptides shorter than five residues are hydrolyzed (such as succinyl-Leu-Tyr-|-NHMec, and Leu-Tyr-Leu-|-Tyr-Trp, in which cleavage of the -Tyr-|-Leu- and -Tyr-|-Trp bonds also occurs).. Functionally, cleaves peptides in various proteins in a process that requires ATP hydrolysis. Has a chymotrypsin-like activity. Plays a major role in the degradation of misfolded proteins. The protein is ATP-dependent Clp protease proteolytic subunit of Huperzia lucidula (Shining clubmoss).